Consider the following 89-residue polypeptide: MSLTQDQKVEIIKQFGTSEKDTGKSEVQVALYTRRISDLTSHLQEHPKDKHSRRGLLMLVAKRKKILNYLKNVDIERYRKVIGELELRK.

Belongs to the universal ribosomal protein uS15 family. As to quaternary structure, part of the 30S ribosomal subunit. Forms a bridge to the 50S subunit in the 70S ribosome, contacting the 23S rRNA.

One of the primary rRNA binding proteins, it binds directly to 16S rRNA where it helps nucleate assembly of the platform of the 30S subunit by binding and bridging several RNA helices of the 16S rRNA. Functionally, forms an intersubunit bridge (bridge B4) with the 23S rRNA of the 50S subunit in the ribosome. The chain is Small ribosomal subunit protein uS15 from Chlorobium chlorochromatii (strain CaD3).